Reading from the N-terminus, the 154-residue chain is Ribosome maturation factor RimP (154 aa).

Belongs to the RimP family.

The protein resides in the cytoplasm. Required for maturation of 30S ribosomal subunits. The protein is Ribosome maturation factor RimP of Cyanothece sp. (strain PCC 7425 / ATCC 29141).